We begin with the raw amino-acid sequence, 919 residues long: Isoleucine--tRNA ligase (919 aa).

Positions 57–67 match the 'HIGH' region motif; the sequence is PYANGHTHIGH. An L-isoleucyl-5'-AMP-binding site is contributed by glutamate 569. The 'KMSKS' region motif lies at 610-614; the sequence is KMSKS. Lysine 613 is an ATP binding site. Zn(2+) contacts are provided by cysteine 895, cysteine 898, cysteine 910, and cysteine 913.

Belongs to the class-I aminoacyl-tRNA synthetase family. IleS type 1 subfamily. In terms of assembly, monomer. Zn(2+) serves as cofactor.

The protein resides in the cytoplasm. It catalyses the reaction tRNA(Ile) + L-isoleucine + ATP = L-isoleucyl-tRNA(Ile) + AMP + diphosphate. Functionally, catalyzes the attachment of isoleucine to tRNA(Ile). As IleRS can inadvertently accommodate and process structurally similar amino acids such as valine, to avoid such errors it has two additional distinct tRNA(Ile)-dependent editing activities. One activity is designated as 'pretransfer' editing and involves the hydrolysis of activated Val-AMP. The other activity is designated 'posttransfer' editing and involves deacylation of mischarged Val-tRNA(Ile). This Sulfurimonas denitrificans (strain ATCC 33889 / DSM 1251) (Thiomicrospira denitrificans (strain ATCC 33889 / DSM 1251)) protein is Isoleucine--tRNA ligase.